Consider the following 628-residue polypeptide: Putative pentatricopeptide repeat-containing protein At3g13770, mitochondrial (628 aa).

The transit peptide at 1 to 19 (MFNLMRLIHRSFSSSPTNY) directs the protein to the mitochondrion. PPR repeat units follow at residues 51-85 (GFHG…RYLP), 86-116 (ATYL…MPEK), 117-151 (NVVS…DGKP), 152-186 (NEFT…NYDS), 187-217 (HIFV…LPER), 218-252 (DVVS…GMSP), 253-287 (NYVT…ELPF), 288-318 (YAVL…MPER), 319-353 (TAIS…KRVK), 355-389 (DAVT…EYGT), and 392-422 (GTEH…MPSK). Residues 427–502 (VLGSLLGACR…EPGRSWIQHE (76 aa)) are type E motif. The tract at residues 503-533 (QTLHYFHANDRTHPRREEVLAKMKEISIKMK) is type E(+) motif. The tract at residues 534–628 (QAGYVPDLSC…DGICSCGDYW (95 aa)) is type DYW motif.

Belongs to the PPR family. PCMP-H subfamily.

The protein resides in the mitochondrion. The protein is Putative pentatricopeptide repeat-containing protein At3g13770, mitochondrial (PCMP-H85) of Arabidopsis thaliana (Mouse-ear cress).